We begin with the raw amino-acid sequence, 541 residues long: Probable inorganic phosphate transporter 1-12 (541 aa).

Residues 1-26 lie on the Cytoplasmic side of the membrane; the sequence is MGRQDQQLQVLNALDAAKTQWYHFTA. The helical transmembrane segment at 27–47 threads the bilayer; the sequence is IIVAGMGFFTDAYDLFCISLV. The Extracellular segment spans residues 48 to 70; the sequence is TKLLGRIYYTDPASPTPGSLPPN. Residues 71 to 91 traverse the membrane as a helical segment; that stretch reads IAAAVNGVALCGTLSGQLFFG. At 92–100 the chain is on the cytoplasmic side; that stretch reads WLGDKLGRK. Residues 101 to 121 traverse the membrane as a helical segment; the sequence is SVYGMTLLLMVICSIASGLSF. The Extracellular segment spans residues 122-124; the sequence is SHT. The chain crosses the membrane as a helical span at residues 125–145; the sequence is PTSVMATLCFFRFWLGFGIGG. The Cytoplasmic segment spans residues 146–163; it reads DYPLSATIMSEYANKKTR. A helical transmembrane segment spans residues 164–184; it reads GAFIAAVFAMQGFGILAGGVV. Residues 185–213 are Extracellular-facing; that stretch reads TLAMSAGFQAAFPAPAYEVNAAASTVPQA. Residues 214–234 traverse the membrane as a helical segment; the sequence is DYVWRIILMLGALPAILTYYW. At 235-297 the chain is on the cytoplasmic side; it reads RMKMPETARY…ARFAKRHGAH (63 aa). A helical membrane pass occupies residues 298–318; that stretch reads LLGTAATWFLVDVAYYSQNLF. At 319-349 the chain is on the extracellular side; the sequence is QKDIFTSIHWIPKARTMSELEEVFRISRAQT. A helical membrane pass occupies residues 350–370; sequence LIALCGTVPGYWFTVFLIDII. Residues 371–374 are Cytoplasmic-facing; that stretch reads GRFK. The chain crosses the membrane as a helical span at residues 375 to 395; it reads IQLLGFAGMTAFMLGLAIPYH. At 396 to 403 the chain is on the extracellular side; sequence HWTMPGNQ. Residues 404 to 424 traverse the membrane as a helical segment; it reads VIFVFLYGFTFFFANFGPNAT. Residues 425–443 are Cytoplasmic-facing; that stretch reads TFIVPAEIFPARLRSTCHG. Residues 444-464 form a helical membrane-spanning segment; it reads ISAASGKAGAIIGAFGFLYAA. At 465–484 the chain is on the extracellular side; sequence QPQDKAHVDAGYKPGIGVRN. The chain crosses the membrane as a helical span at residues 485–505; it reads ALFVLAGCNLVGFLMTWMLVP. Residues 506 to 541 lie on the Cytoplasmic side of the membrane; that stretch reads ESKGKSLEEMSGEADDEEASANGGATAVNSSGVEMV. Residues 512-541 form a disordered region; the sequence is LEEMSGEADDEEASANGGATAVNSSGVEMV. Residues 515-524 show a composition bias toward acidic residues; the sequence is MSGEADDEEA. Polar residues predominate over residues 532-541; the sequence is AVNSSGVEMV.

Belongs to the major facilitator superfamily. Phosphate:H(+) symporter (TC 2.A.1.9) family.

The protein resides in the membrane. Its function is as follows. High-affinity transporter for external inorganic phosphate. The polypeptide is Probable inorganic phosphate transporter 1-12 (PHT1-12) (Oryza sativa subsp. japonica (Rice)).